A 190-amino-acid polypeptide reads, in one-letter code: ATP synthase subunit b (190 aa).

Residues 4–24 (ILAPVLSLVLIAGVASPALAA) traverse the membrane as a helical segment.

It belongs to the ATPase B chain family. As to quaternary structure, F-type ATPases have 2 components, F(1) - the catalytic core - and F(0) - the membrane proton channel. F(1) has five subunits: alpha(3), beta(3), gamma(1), delta(1), epsilon(1). F(0) has three main subunits: a(1), b(2) and c(10-14). The alpha and beta chains form an alternating ring which encloses part of the gamma chain. F(1) is attached to F(0) by a central stalk formed by the gamma and epsilon chains, while a peripheral stalk is formed by the delta and b chains.

The protein localises to the cell inner membrane. Functionally, f(1)F(0) ATP synthase produces ATP from ADP in the presence of a proton or sodium gradient. F-type ATPases consist of two structural domains, F(1) containing the extramembraneous catalytic core and F(0) containing the membrane proton channel, linked together by a central stalk and a peripheral stalk. During catalysis, ATP synthesis in the catalytic domain of F(1) is coupled via a rotary mechanism of the central stalk subunits to proton translocation. Component of the F(0) channel, it forms part of the peripheral stalk, linking F(1) to F(0). This chain is ATP synthase subunit b, found in Ruegeria pomeroyi (strain ATCC 700808 / DSM 15171 / DSS-3) (Silicibacter pomeroyi).